The chain runs to 25 residues: GIFSSRKCKTVSKTFRGICTRNANC.

Belongs to the DEFL family. Group IV subfamily. As to expression, distributed in the epidermal cell layer of leaves and in the subepidermal layer region of stems. Not in roots.

It localises to the secreted. The protein resides in the cell wall. In terms of biological role, antimicrobial peptide. Active against Fusarium spp., Gram-positive and Gram-negative bacterial pathogens. This chain is Defensin D3, found in Spinacia oleracea (Spinach).